The following is a 126-amino-acid chain: Autophagy-related protein 8-like protein DDB_G0290491 (126 aa).

The Phosphatidylethanolamine amidated glycine moiety is linked to residue Gly-123. Residues 124–126 constitute a propeptide, removed in mature form; the sequence is SDI.

The protein belongs to the ATG8 family.

Its subcellular location is the membrane. This is Autophagy-related protein 8-like protein DDB_G0290491 from Dictyostelium discoideum (Social amoeba).